The following is a 465-amino-acid chain: Gamma-aminobutyric acid receptor subunit rho-2 (465 aa).

The signal sequence occupies residues 1–20; the sequence is MPYFMRLALFLFCLMALVES. At 21 to 260 the chain is on the extracellular side; the sequence is RKPRRKRWTG…LYINFTLRRH (240 aa). A 4-aminobutanoate-binding site is contributed by R105. The N-linked (GlcNAc...) asparagine glycan is linked to N120. Position 169 (S169) interacts with 4-aminobutanoate. Residues C178 and C192 are joined by a disulfide bond. E197 lines the 4-aminobutanoate pocket. An N-linked (GlcNAc...) asparagine glycan is attached at N254. Residues 261-281 form a helical membrane-spanning segment; the sequence is IFFFLLQTYFPATLMVMLSWV. The Cytoplasmic segment spans residues 282–293; the sequence is SFWIDHRAVPAR. Residues 294–314 form a helical membrane-spanning segment; it reads VSLGIMTVLTMSTIITGVNAS. The Extracellular segment spans residues 315-325; that stretch reads MPRVSYIRAVD. A helical membrane pass occupies residues 326-346; it reads IYLWVSFVFVFLSVLEYAAVN. Residues 347–443 are Cytoplasmic-facing; sequence YLTTVQEQKE…IFQNTHAIDK (97 aa). A helical transmembrane segment spans residues 444-464; sequence YSRLIFPAFYIVFNLIYWSVF. Residue S465 is a topological domain, extracellular.

The protein belongs to the ligand-gated ion channel (TC 1.A.9) family. Gamma-aminobutyric acid receptor (TC 1.A.9.5) subfamily. GABRR2 sub-subfamily. Three rho subunits (rho-1/GBRR1, rho-2/GBRR2 and rho-3/GBRR3) coassemble either to form functional homopentamers or heteropentamers. Rho-2 is unable to form a functional homopentamer. Interacts with SQSTM1. As to expression, expressed in spinal cord and in cerebellum. Expressed in retina.

The protein resides in the postsynaptic cell membrane. The protein localises to the cell membrane. The enzyme catalyses chloride(in) = chloride(out). Its activity is regulated as follows. In contrast with rho-1 and rho-3 homopentamers, rho-2 GABAARs are not inhibited by picrotoxin. Functionally, rho subunit of the pentameric ligand-gated chloride channels responsible for mediating the effects of gamma-aminobutyric acid (GABA), the major inhibitory neurotransmitter in the brain. Rho-containing GABA-gated chloride channels are a subclass of GABA(A) receptors (GABAARs) entirely composed of rho subunits, where GABA molecules bind at the rho intersubunit interfaces. When activated by GABA, rho-GABAARs selectively allow the flow of chloride anions across the cell membrane down their electrochemical gradient. Rho-2 GABAARs may contribute to the regulation of glial development in the cerebellum by controlling extrasynaptic transmission. Rho-2 GABAARs are also involved in neuronal tonic (extrasynaptic) and phasic (synaptic) transmission in the Purkinje neurons of the cerebellum. Rho-2 GABAARs expressed in retina may play a role in retinal neurotransmission. The protein is Gamma-aminobutyric acid receptor subunit rho-2 of Rattus norvegicus (Rat).